Reading from the N-terminus, the 758-residue chain is RNA-directed RNA polymerase catalytic subunit (758 aa).

The disordered stretch occupies residues 53 to 82 (GRWTTNTETGAPQLNPIDGPLPEDNEPSGY). The segment covering 55–64 (WTTNTETGAP) has biased composition (polar residues). 2 consecutive short sequence motifs (nuclear localization signal) follow at residues 187-195 (RKRRVRDNM) and 203-216 (RTIG…TKKS). Residues 249-256 (RGFVHFVE) are promoter-binding site. The RdRp catalytic domain occupies 286–483 (VRKMMTNSQD…GINMSKKKSY (198 aa)).

This sequence belongs to the influenza viruses polymerase PB1 family. In terms of assembly, influenza RNA polymerase is composed of three subunits: PB1, PB2 and PA. Interacts (via N-terminus) with PA (via C-terminus). Interacts (via C-terminus) with PB2 (via N-terminus); this interaction is essential for transcription initiation. Phosphorylated by host PRKCA.

The protein resides in the host nucleus. Its subcellular location is the host cytoplasm. The catalysed reaction is RNA(n) + a ribonucleoside 5'-triphosphate = RNA(n+1) + diphosphate. Functionally, RNA-dependent RNA polymerase which is responsible for replication and transcription of virus RNA segments. The transcription of viral mRNAs occurs by a unique mechanism called cap-snatching. 5' methylated caps of cellular mRNAs are cleaved after 10-13 nucleotides by PA. In turn, these short capped RNAs are used as primers by PB1 for transcription of viral mRNAs. During virus replication, PB1 initiates RNA synthesis and copy vRNA into complementary RNA (cRNA) which in turn serves as a template for the production of more vRNAs. This is RNA-directed RNA polymerase catalytic subunit from Aves (Cat).